Here is a 415-residue protein sequence, read N- to C-terminus: Ankyrin repeat domain-containing protein 10 (415 aa).

ANK repeat units follow at residues 20 to 49 (SLRFPLHRACRDGDLVALCSLLPHTPRAHL), 56 to 85 (YGWTPVHWAAHFGKLECLMQLVRAGASLNV), 90 to 119 (YAQTPAHIAAFGGHPQCLVWLIQAGANINK), and 123 to 152 (EGETPIHKAARSGSLECITALVGSGAHTDL). Positions 303–325 (TGSNGVSNGQPLSSGQASVSANG) are enriched in polar residues. Residues 303–330 (TGSNGVSNGQPLSSGQASVSANGTEEPE) form a disordered region.

The sequence is that of Ankyrin repeat domain-containing protein 10 (Ankrd10) from Mus musculus (Mouse).